The following is a 271-amino-acid chain: Tryptophan synthase alpha chain (271 aa).

Catalysis depends on proton acceptor residues E49 and D60.

It belongs to the TrpA family. As to quaternary structure, tetramer of two alpha and two beta chains.

The enzyme catalyses (1S,2R)-1-C-(indol-3-yl)glycerol 3-phosphate + L-serine = D-glyceraldehyde 3-phosphate + L-tryptophan + H2O. The protein operates within amino-acid biosynthesis; L-tryptophan biosynthesis; L-tryptophan from chorismate: step 5/5. Its function is as follows. The alpha subunit is responsible for the aldol cleavage of indoleglycerol phosphate to indole and glyceraldehyde 3-phosphate. This Leptothrix cholodnii (strain ATCC 51168 / LMG 8142 / SP-6) (Leptothrix discophora (strain SP-6)) protein is Tryptophan synthase alpha chain.